Consider the following 515-residue polypeptide: 1-pyrroline-5-carboxylate dehydrogenase (515 aa).

Active-site residues include E286 and C320.

It belongs to the aldehyde dehydrogenase family. RocA subfamily.

The catalysed reaction is L-glutamate 5-semialdehyde + NAD(+) + H2O = L-glutamate + NADH + 2 H(+). It functions in the pathway amino-acid degradation; L-proline degradation into L-glutamate; L-glutamate from L-proline: step 2/2. The chain is 1-pyrroline-5-carboxylate dehydrogenase from Bacillus pumilus (strain SAFR-032).